The primary structure comprises 355 residues: Uroporphyrinogen decarboxylase (355 aa).

Residues 27–31, Asp77, Tyr154, Thr209, and His327 contribute to the substrate site; that span reads RQAGR.

This sequence belongs to the uroporphyrinogen decarboxylase family. Homodimer.

Its subcellular location is the cytoplasm. It catalyses the reaction uroporphyrinogen III + 4 H(+) = coproporphyrinogen III + 4 CO2. It functions in the pathway porphyrin-containing compound metabolism; protoporphyrin-IX biosynthesis; coproporphyrinogen-III from 5-aminolevulinate: step 4/4. In terms of biological role, catalyzes the decarboxylation of four acetate groups of uroporphyrinogen-III to yield coproporphyrinogen-III. This Tolumonas auensis (strain DSM 9187 / NBRC 110442 / TA 4) protein is Uroporphyrinogen decarboxylase.